Consider the following 90-residue polypeptide: Small ribosomal subunit protein bS18 (90 aa).

Belongs to the bacterial ribosomal protein bS18 family. In terms of assembly, part of the 30S ribosomal subunit. Forms a tight heterodimer with protein bS6.

Binds as a heterodimer with protein bS6 to the central domain of the 16S rRNA, where it helps stabilize the platform of the 30S subunit. This Bacteroides thetaiotaomicron (strain ATCC 29148 / DSM 2079 / JCM 5827 / CCUG 10774 / NCTC 10582 / VPI-5482 / E50) protein is Small ribosomal subunit protein bS18.